A 330-amino-acid polypeptide reads, in one-letter code: Polygalacturonase inhibitor 2 (330 aa).

A signal peptide spans 1-21 (MDKTMTLFLLLSTLLLTTSLA). 2 disulfide bridges follow: Cys-25–Cys-55 and Cys-56–Cys-63. 10 LRR repeats span residues 69 to 93 (NHRV…VGDL), 94 to 117 (PYLT…TIAK), 118 to 141 (LKNL…FLSQ), 142 to 166 (LKNL…LSSL), 167 to 192 (RKLE…TFSG), 194 to 215 (VPSL…LGNP), 217 to 237 (FYRI…LFGA), 238 to 260 (KKTT…KVKL), 261 to 285 (AKTL…WSKA), and 287 to 308 (FQLL…EYIQ). 3 N-linked (GlcNAc...) asparagine glycosylation sites follow: Asn-106, Asn-120, and Asn-130. A glycan (N-linked (GlcNAc...) asparagine) is linked at Asn-291. Cystine bridges form between Cys-298–Cys-320 and Cys-322–Cys-329.

It belongs to the polygalacturonase-inhibiting protein family.

The protein resides in the secreted. Its subcellular location is the cell wall. The protein localises to the membrane. Its function is as follows. Inhibitor of fungal polygalacturonase. It is an important factor for plant resistance to phytopathogenic fungi. The protein is Polygalacturonase inhibitor 2 (PGIP2) of Arabidopsis thaliana (Mouse-ear cress).